Consider the following 439-residue polypeptide: Microfibrillar-associated protein 1 (439 aa).

Disordered regions lie at residues 1–27 and 39–200; these read MSVP…NEKG and YVSG…PRLK. Serine 2 is subject to N-acetylserine. 2 positions are modified to phosphoserine: serine 52 and serine 53. Over residues 61 to 70 the composition is skewed to basic and acidic residues; that stretch reads QFIKKAKEQE. Lysine 67 is covalently cross-linked (Glycyl lysine isopeptide (Lys-Gly) (interchain with G-Cter in SUMO2)). A compositionally biased stretch (acidic residues) spans 71–81; the sequence is AEPEEQEEDSS. Residues serine 94, serine 116, serine 118, serine 132, and serine 133 each carry the phosphoserine modification. 2 stretches are compositionally biased toward acidic residues: residues 112–122 and 131–144; these read VVGESDSEVEG and DSSE…DDEE. The span at 145 to 163 shows a compositional bias: basic and acidic residues; that stretch reads IERRRGMMRQRAQERKNEE. Acidic residues predominate over residues 178-195; that stretch reads ESESESEYEEYTDSEDEM. Lysine 249 is covalently cross-linked (Glycyl lysine isopeptide (Lys-Gly) (interchain with G-Cter in SUMO2)). A Phosphothreonine modification is found at threonine 267. A Glycyl lysine isopeptide (Lys-Gly) (interchain with G-Cter in SUMO2) cross-link involves residue lysine 357. Position 361 is a phosphoserine (serine 361). Glycyl lysine isopeptide (Lys-Gly) (interchain with G-Cter in SUMO2) cross-links involve residues lysine 371, lysine 381, lysine 415, and lysine 418. Serine 432 is modified (phosphoserine).

Belongs to the MFAP1 family. Component of the spliceosome B complex. Interacts with PRPF38A (via N-terminal interaction domain).

It localises to the nucleus. Functionally, involved in pre-mRNA splicing as a component of the spliceosome. The chain is Microfibrillar-associated protein 1 from Homo sapiens (Human).